Reading from the N-terminus, the 332-residue chain is 2,3-diketo-L-gulonate reductase (332 aa).

The active-site Proton donor is the histidine 44. Residues 168-174, 224-225, and 304-306 each bind NAD(+); these read ITMVDMS, WK, and GHE.

The protein belongs to the LDH2/MDH2 oxidoreductase family. DlgD subfamily. In terms of assembly, homodimer.

The protein localises to the cytoplasm. The catalysed reaction is 3-dehydro-L-gulonate + NAD(+) = 2,3-dioxo-L-gulonate + NADH + H(+). It catalyses the reaction 3-dehydro-L-gulonate + NADP(+) = 2,3-dioxo-L-gulonate + NADPH + H(+). In terms of biological role, catalyzes the reduction of 2,3-diketo-L-gulonate in the presence of NADH, to form 3-keto-L-gulonate. This is 2,3-diketo-L-gulonate reductase from Haemophilus influenzae (strain ATCC 51907 / DSM 11121 / KW20 / Rd).